Here is a 213-residue protein sequence, read N- to C-terminus: Thymidylate kinase (213 aa).

An ATP-binding site is contributed by 10-17 (GLEGAGKT).

It belongs to the thymidylate kinase family.

The enzyme catalyses dTMP + ATP = dTDP + ADP. Phosphorylation of dTMP to form dTDP in both de novo and salvage pathways of dTTP synthesis. In Enterobacter sp. (strain 638), this protein is Thymidylate kinase.